The primary structure comprises 448 residues: Glucose-6-phosphate isomerase (448 aa).

Glu-290 serves as the catalytic Proton donor. Catalysis depends on residues His-311 and Lys-425.

This sequence belongs to the GPI family.

It localises to the cytoplasm. The catalysed reaction is alpha-D-glucose 6-phosphate = beta-D-fructose 6-phosphate. The protein operates within carbohydrate biosynthesis; gluconeogenesis. Its pathway is carbohydrate degradation; glycolysis; D-glyceraldehyde 3-phosphate and glycerone phosphate from D-glucose: step 2/4. Catalyzes the reversible isomerization of glucose-6-phosphate to fructose-6-phosphate. This is Glucose-6-phosphate isomerase from Acetivibrio thermocellus (strain ATCC 27405 / DSM 1237 / JCM 9322 / NBRC 103400 / NCIMB 10682 / NRRL B-4536 / VPI 7372) (Clostridium thermocellum).